A 188-amino-acid polypeptide reads, in one-letter code: GTPase KRas (188 aa).

GTP is bound by residues 10 to 18, 29 to 35, 59 to 60, and 116 to 119; these read GAGGVGKSA, VDEYDPT, AG, and NKYD. Residues 32–40 carry the Effector region motif; it reads YDPTIEDSY. The tract at residues 167-188 is disordered; that stretch reads KEKMSKEGKKKKKKSKTKCILM. Cys-185 carries the post-translational modification Cysteine methyl ester. Residue Cys-185 is the site of S-farnesyl cysteine attachment. Positions 186–188 are cleaved as a propeptide — removed in mature form; it reads ILM.

This sequence belongs to the small GTPase superfamily. Ras family.

It localises to the cell membrane. Its subcellular location is the cytoplasm. It catalyses the reaction GTP + H2O = GDP + phosphate + H(+). With respect to regulation, alternates between an inactive form bound to GDP and an active form bound to GTP. Activated by a guanine nucleotide-exchange factor (GEF) and inactivated by a GTPase-activating protein (GAP). Functionally, ras proteins bind GDP/GTP and possess intrinsic GTPase activity. Plays an important role in the regulation of cell proliferation. May play a role in promoting oncogenic events by inducing transcriptional silencing of tumor suppressor genes (TSGs). The chain is GTPase KRas (kras) from Kryptolebias marmoratus (Mangrove killifish).